Reading from the N-terminus, the 215-residue chain is Cytochrome b6 (215 aa).

Residues 32–52 (IFYCLGGITLTCFLVQVATGF) traverse the membrane as a helical segment. Cys-35 serves as a coordination point for heme c. The heme b site is built by His-86 and His-100. Helical transmembrane passes span 90–110 (ASMMVLMMILHIFRVYLTGGF), 116–136 (LTWVTGVILAVLTVSFGVTGY), and 186–206 (LHTFVLPLLTAIFMLMHFLMI). Heme b-binding residues include His-187 and His-202.

The protein belongs to the cytochrome b family. PetB subfamily. As to quaternary structure, the 4 large subunits of the cytochrome b6-f complex are cytochrome b6, subunit IV (17 kDa polypeptide, PetD), cytochrome f and the Rieske protein, while the 4 small subunits are PetG, PetL, PetM and PetN. The complex functions as a dimer. The cofactor is heme b. Requires heme c as cofactor.

It localises to the plastid. Its subcellular location is the chloroplast thylakoid membrane. Its function is as follows. Component of the cytochrome b6-f complex, which mediates electron transfer between photosystem II (PSII) and photosystem I (PSI), cyclic electron flow around PSI, and state transitions. This chain is Cytochrome b6, found in Marchantia polymorpha (Common liverwort).